The chain runs to 697 residues: MWSRAIFQRFRFRAFSISHVIHGKCYRSFSVTVEFQNREVLICNHLLSRRIDEAREVFNQVPSPHVSLYTKMITGYTRSNRLVDALNLFDEMPVRDVVSWNSMISGCVECGDMNTAVKLFDEMPERSVVSWTAMVNGCFRSGKVDQAERLFYQMPVKDTAAWNSMVHGYLQFGKVDDALKLFKQMPGKNVISWTTMICGLDQNERSGEALDLFKNMLRCCIKSTSRPFTCVITACANAPAFHMGIQVHGLIIKLGFLYEEYVSASLITFYANCKRIGDSRKVFDEKVHEQVAVWTALLSGYSLNKKHEDALSIFSGMLRNSILPNQSTFASGLNSCSALGTLDWGKEMHGVAVKLGLETDAFVGNSLVVMYSDSGNVNDAVSVFIKIFKKSIVSWNSIIVGCAQHGRGKWAFVIFGQMIRLNKEPDEITFTGLLSACSHCGFLEKGRKLFYYMSSGINHIDRKIQHYTCMVDILGRCGKLKEAEELIERMVVKPNEMVWLALLSACRMHSDVDRGEKAAAAIFNLDSKSSAAYVLLSNIYASAGRWSNVSKLRVKMKKNGIMKKPGSSWVVIRGKKHEFFSGDQPHCSRIYEKLEFLREKLKELGYAPDYRSALHDVEDEQKEEMLWYHSERLAIAFGLINTVEGSAVTVMKNLRVCEDCHTVIKLISGVVGREIVLRDPIRFHHFKNGTCSCGDYW.

A mitochondrion-targeting transit peptide spans 1–36 (MWSRAIFQRFRFRAFSISHVIHGKCYRSFSVTVEFQ). PPR repeat units lie at residues 39–64 (EVLI…VPSP), 65–95 (HVSL…MPVR), 96–130 (DVVS…SVVS), 131–157 (WTAM…MPVK), 158–192 (DTAA…NVIS), 193–223 (WTTM…CIKS), 224–258 (TSRP…GFLY), 259–289 (EEYV…KVHE), 290–324 (QVAV…SILP), 325–359 (NQST…GLET), 360–390 (DAFV…IFKK), 391–425 (SIVS…NKEP), 426–456 (DEIT…MSSG), and 463–497 (KIQH…PNEM). A type E motif region spans residues 498–573 (VWLALLSACR…KPGSSWVVIR (76 aa)). The interval 574-602 (GKKHEFFSGDQPHCSRIYEKLEFLREKLK) is type E(+) motif. A type DYW motif region spans residues 603-697 (ELGYAPDYRS…NGTCSCGDYW (95 aa)).

This sequence belongs to the PPR family. PCMP-H subfamily.

It is found in the mitochondrion. The chain is Pentatricopeptide repeat-containing protein At5g46460, mitochondrial (PCMP-H49) from Arabidopsis thaliana (Mouse-ear cress).